We begin with the raw amino-acid sequence, 867 residues long: E3 ubiquitin-protein ligase SH3RF1 (867 aa).

The segment at 12–53 (CPVCLERLDATAKVLPCQHTFCRRCLLGIVGSRGELRCPECR) adopts an RING-type zinc-finger fold. The interval 101–127 (AQGAGGSQRDPGPTGGQSQRVQAKSTP) is disordered. Over residues 116 to 125 (GQSQRVQAKS) the composition is skewed to polar residues. SH3 domains lie at 132 to 191 (PQLP…VIKP) and 194 to 257 (QPPP…FNSA). The disordered stretch occupies residues 265–328 (DKPSEGGGDS…PPPQRHSMEI (64 aa)). Over residues 275 to 285 (SEGPSSSSSGP) the composition is skewed to low complexity. The region spanning 436–497 (QRPTVYVAMF…PGNYMSPVSR (62 aa)) is the SH3 3 domain. The tract at residues 706 to 794 (LSNKKKLRPS…APIAPPPRQP (89 aa)) is disordered. The span at 760 to 769 (SELSMSSSSS) shows a compositional bias: low complexity. Polar residues predominate over residues 770 to 784 (NTDAVTHRSSPQDNT). The region spanning 808–867 (IVCERYRVVVSYPPQSEAELELKEGDIVFVHKKREDGWFKGTLQRNGRTGLFPGSFVDSI) is the SH3 4 domain.

It belongs to the SH3RF family. Autoubiquitinated. Ubiquitinated by SH3RF2, leading to proteasome-mediated degradation.

It is found in the cytoplasm. It localises to the perinuclear region. The protein resides in the cell projection. Its subcellular location is the lamellipodium. The protein localises to the golgi apparatus. It is found in the trans-Golgi network. The enzyme catalyses S-ubiquitinyl-[E2 ubiquitin-conjugating enzyme]-L-cysteine + [acceptor protein]-L-lysine = [E2 ubiquitin-conjugating enzyme]-L-cysteine + N(6)-ubiquitinyl-[acceptor protein]-L-lysine.. The protein operates within protein modification; protein ubiquitination. In terms of biological role, has E3 ubiquitin-protein ligase activity. In the absence of an external substrate, it can catalyze self-ubiquitination. Acts as a scaffold protein that contributes to the effective activation of the JNK signaling pathway. The protein is E3 ubiquitin-protein ligase SH3RF1 (sh3rf1) of Danio rerio (Zebrafish).